We begin with the raw amino-acid sequence, 1042 residues long: Isoleucine--tRNA ligase (1042 aa).

A 'HIGH' region motif is present at residues 59 to 69 (PFANGLPHYGH). A 'KMSKS' region motif is present at residues 619 to 623 (KMSKS). Lys-622 contacts ATP.

It belongs to the class-I aminoacyl-tRNA synthetase family. IleS type 2 subfamily. Monomer. Zn(2+) serves as cofactor.

The protein localises to the cytoplasm. The enzyme catalyses tRNA(Ile) + L-isoleucine + ATP = L-isoleucyl-tRNA(Ile) + AMP + diphosphate. Functionally, catalyzes the attachment of isoleucine to tRNA(Ile). As IleRS can inadvertently accommodate and process structurally similar amino acids such as valine, to avoid such errors it has two additional distinct tRNA(Ile)-dependent editing activities. One activity is designated as 'pretransfer' editing and involves the hydrolysis of activated Val-AMP. The other activity is designated 'posttransfer' editing and involves deacylation of mischarged Val-tRNA(Ile). The polypeptide is Isoleucine--tRNA ligase (Nocardia farcinica (strain IFM 10152)).